The following is a 767-amino-acid chain: Phosphoribosylformylglycinamidine synthase subunit PurL (767 aa).

The active site involves histidine 46. ATP contacts are provided by tyrosine 49 and lysine 88. Glutamate 90 lines the Mg(2+) pocket. Substrate is bound by residues 91–94 (SHNH) and arginine 113. The active-site Proton acceptor is the histidine 92. Aspartate 114 contacts Mg(2+). Residue glutamine 237 coordinates substrate. A Mg(2+)-binding site is contributed by aspartate 265. Residue 309–311 (ESQ) coordinates substrate. Positions 498 and 535 each coordinate ATP. Position 536 (asparagine 536) interacts with Mg(2+). A substrate-binding site is contributed by serine 538.

The protein belongs to the FGAMS family. In terms of assembly, monomer. Part of the FGAM synthase complex composed of 1 PurL, 1 PurQ and 2 PurS subunits.

It is found in the cytoplasm. It carries out the reaction N(2)-formyl-N(1)-(5-phospho-beta-D-ribosyl)glycinamide + L-glutamine + ATP + H2O = 2-formamido-N(1)-(5-O-phospho-beta-D-ribosyl)acetamidine + L-glutamate + ADP + phosphate + H(+). It functions in the pathway purine metabolism; IMP biosynthesis via de novo pathway; 5-amino-1-(5-phospho-D-ribosyl)imidazole from N(2)-formyl-N(1)-(5-phospho-D-ribosyl)glycinamide: step 1/2. In terms of biological role, part of the phosphoribosylformylglycinamidine synthase complex involved in the purines biosynthetic pathway. Catalyzes the ATP-dependent conversion of formylglycinamide ribonucleotide (FGAR) and glutamine to yield formylglycinamidine ribonucleotide (FGAM) and glutamate. The FGAM synthase complex is composed of three subunits. PurQ produces an ammonia molecule by converting glutamine to glutamate. PurL transfers the ammonia molecule to FGAR to form FGAM in an ATP-dependent manner. PurS interacts with PurQ and PurL and is thought to assist in the transfer of the ammonia molecule from PurQ to PurL. This chain is Phosphoribosylformylglycinamidine synthase subunit PurL, found in Anaeromyxobacter sp. (strain Fw109-5).